Reading from the N-terminus, the 205-residue chain is RNA pyrophosphohydrolase (205 aa).

Residues 6–149 (GFRPNVGIVL…KRGVYARALR (144 aa)) form the Nudix hydrolase domain. A Nudix box motif is present at residues 38-59 (GGMNTDETPVEAMYRELREETG). Residues 178 to 205 (GSSAAGHDRPRKRPRKRGGVLPVRINND) are disordered. Over residues 186-195 (RPRKRPRKRG) the composition is skewed to basic residues.

Belongs to the Nudix hydrolase family. RppH subfamily. A divalent metal cation is required as a cofactor.

Functionally, accelerates the degradation of transcripts by removing pyrophosphate from the 5'-end of triphosphorylated RNA, leading to a more labile monophosphorylated state that can stimulate subsequent ribonuclease cleavage. The chain is RNA pyrophosphohydrolase from Xanthomonas campestris pv. campestris (strain 8004).